Reading from the N-terminus, the 117-residue chain is Immunoglobulin heavy variable 1-3 (117 aa).

The signal sequence occupies residues 1–19; that stretch reads MDWTWRILFLVAAATGAHS. The tract at residues 20-44 is framework-1; sequence QVQLVQSGAEVKKPGASVKVSCKAS. The region spanning 20–117 is the Ig-like domain; that stretch reads QVQLVQSGAE…EDTAVYYCAR (98 aa). Cysteines 41 and 115 form a disulfide. The complementarity-determining-1 stretch occupies residues 45–52; sequence GYTFTSYA. A framework-2 region spans residues 53–69; that stretch reads MHWVRQAPGQRLEWMGW. Residues 70 to 77 are complementarity-determining-2; sequence INAGNGNT. Positions 78–115 are framework-3; that stretch reads KYSQKFQGRVTITRDTSASTAYMELSSLRSEDTAVYYC. Residues 116-117 are complementarity-determining-3; it reads AR.

In terms of assembly, immunoglobulins are composed of two identical heavy chains and two identical light chains; disulfide-linked.

The protein localises to the secreted. Its subcellular location is the cell membrane. V region of the variable domain of immunoglobulin heavy chains that participates in the antigen recognition. Immunoglobulins, also known as antibodies, are membrane-bound or secreted glycoproteins produced by B lymphocytes. In the recognition phase of humoral immunity, the membrane-bound immunoglobulins serve as receptors which, upon binding of a specific antigen, trigger the clonal expansion and differentiation of B lymphocytes into immunoglobulins-secreting plasma cells. Secreted immunoglobulins mediate the effector phase of humoral immunity, which results in the elimination of bound antigens. The antigen binding site is formed by the variable domain of one heavy chain, together with that of its associated light chain. Thus, each immunoglobulin has two antigen binding sites with remarkable affinity for a particular antigen. The variable domains are assembled by a process called V-(D)-J rearrangement and can then be subjected to somatic hypermutations which, after exposure to antigen and selection, allow affinity maturation for a particular antigen. The chain is Immunoglobulin heavy variable 1-3 from Homo sapiens (Human).